Reading from the N-terminus, the 325-residue chain is Glycerol-3-phosphate dehydrogenase [NAD(P)+] (325 aa).

Residues Trp-11, Arg-30, and Lys-103 each coordinate NADPH. Sn-glycerol 3-phosphate-binding residues include Lys-103, Gly-131, and Ser-133. Residue Ala-135 participates in NADPH binding. Positions 186, 242, 252, 253, and 254 each coordinate sn-glycerol 3-phosphate. Catalysis depends on Lys-186, which acts as the Proton acceptor. Arg-253 provides a ligand contact to NADPH. Val-279 and Glu-281 together coordinate NADPH.

This sequence belongs to the NAD-dependent glycerol-3-phosphate dehydrogenase family.

The protein localises to the cytoplasm. The enzyme catalyses sn-glycerol 3-phosphate + NAD(+) = dihydroxyacetone phosphate + NADH + H(+). It carries out the reaction sn-glycerol 3-phosphate + NADP(+) = dihydroxyacetone phosphate + NADPH + H(+). It participates in membrane lipid metabolism; glycerophospholipid metabolism. In terms of biological role, catalyzes the reduction of the glycolytic intermediate dihydroxyacetone phosphate (DHAP) to sn-glycerol 3-phosphate (G3P), the key precursor for phospholipid synthesis. This chain is Glycerol-3-phosphate dehydrogenase [NAD(P)+], found in Wolbachia pipientis subsp. Culex pipiens (strain wPip).